Consider the following 737-residue polypeptide: Elongation factor 2 (737 aa).

Residues Thr-18–Arg-262 form the tr-type G domain. GTP contacts are provided by residues Ala-27–Thr-34, Asp-93–His-97, and Asn-147–Asp-150. Diphthamide is present on His-604.

The protein belongs to the TRAFAC class translation factor GTPase superfamily. Classic translation factor GTPase family. EF-G/EF-2 subfamily.

It localises to the cytoplasm. In terms of biological role, catalyzes the GTP-dependent ribosomal translocation step during translation elongation. During this step, the ribosome changes from the pre-translocational (PRE) to the post-translocational (POST) state as the newly formed A-site-bound peptidyl-tRNA and P-site-bound deacylated tRNA move to the P and E sites, respectively. Catalyzes the coordinated movement of the two tRNA molecules, the mRNA and conformational changes in the ribosome. This Sulfurisphaera tokodaii (strain DSM 16993 / JCM 10545 / NBRC 100140 / 7) (Sulfolobus tokodaii) protein is Elongation factor 2 (fusA).